Consider the following 335-residue polypeptide: COP9 signalosome complex subunit 5 (335 aa).

The 137-residue stretch at 51-187 folds into the MPN domain; that stretch reads VRISAVALLK…IGAFRTFPKD (137 aa). Histidine 134, histidine 136, and aspartate 147 together coordinate Zn(2+). The short motif at 134–147 is the JAMM motif element; it reads HSHPGYGCWLSGID.

The protein belongs to the peptidase M67A family. CSN5 subfamily. As to quaternary structure, component of the COP9 signalosome (CSN) complex.

The protein localises to the cytoplasm. Its subcellular location is the nucleus. Its function is as follows. Catalytic component of the COP9 signalosome (CSN) complex that acts as an regulator of the ubiquitin (Ubl) conjugation pathway by mediating the deneddylation of the cullin subunit of SCF-type E3 ubiquitin-protein ligase complexes. The CSN complex seems to link protein degradation to sexual development. Required for fruit body formation. This Emericella nidulans (strain FGSC A4 / ATCC 38163 / CBS 112.46 / NRRL 194 / M139) (Aspergillus nidulans) protein is COP9 signalosome complex subunit 5 (rri1).